Reading from the N-terminus, the 329-residue chain is Very long chain fatty acid elongase 7 (329 aa).

Helical transmembrane passes span 26-46 (YPLM…AYIV), 66-86 (LIVY…ESCI), 114-134 (GCWW…FFVM), 146-166 (VIHH…TPGG), 170-190 (FFGF…MLAA), 205-225 (LTVM…QLFF), and 233-253 (IGFA…FSNF).

The protein belongs to the ELO family.

It is found in the membrane. It carries out the reaction a very-long-chain acyl-CoA + malonyl-CoA + H(+) = a very-long-chain 3-oxoacyl-CoA + CO2 + CoA. Functionally, catalyzes the first and rate-limiting reaction of the four reactions that constitute the long-chain fatty acids elongation cycle. This endoplasmic reticulum-bound enzymatic process allows the addition of 2 carbons to the chain of long- and very long-chain fatty acids (VLCFAs) per cycle. This Drosophila melanogaster (Fruit fly) protein is Very long chain fatty acid elongase 7.